Here is an 882-residue protein sequence, read N- to C-terminus: Alanine--tRNA ligase (882 aa).

Residues H568, H572, C670, and H674 each contribute to the Zn(2+) site.

The protein belongs to the class-II aminoacyl-tRNA synthetase family. The cofactor is Zn(2+).

The protein resides in the cytoplasm. It carries out the reaction tRNA(Ala) + L-alanine + ATP = L-alanyl-tRNA(Ala) + AMP + diphosphate. Its function is as follows. Catalyzes the attachment of alanine to tRNA(Ala) in a two-step reaction: alanine is first activated by ATP to form Ala-AMP and then transferred to the acceptor end of tRNA(Ala). Also edits incorrectly charged Ser-tRNA(Ala) and Gly-tRNA(Ala) via its editing domain. This is Alanine--tRNA ligase from Syntrophotalea carbinolica (strain DSM 2380 / NBRC 103641 / GraBd1) (Pelobacter carbinolicus).